The chain runs to 101 residues: NADH-quinone oxidoreductase subunit K (101 aa).

The next 3 helical transmembrane spans lie at 4 to 24 (LSHYLTVAAILFTLGVLGIFI), 29 to 49 (IIVILMSVELILLAVNINLVA), and 65 to 85 (FVLTVAAAEAAIGLAILVVFF).

Belongs to the complex I subunit 4L family. As to quaternary structure, NDH-1 is composed of 14 different subunits. Subunits NuoA, H, J, K, L, M, N constitute the membrane sector of the complex.

Its subcellular location is the cell inner membrane. It carries out the reaction a quinone + NADH + 5 H(+)(in) = a quinol + NAD(+) + 4 H(+)(out). NDH-1 shuttles electrons from NADH, via FMN and iron-sulfur (Fe-S) centers, to quinones in the respiratory chain. The immediate electron acceptor for the enzyme in this species is believed to be ubiquinone. Couples the redox reaction to proton translocation (for every two electrons transferred, four hydrogen ions are translocated across the cytoplasmic membrane), and thus conserves the redox energy in a proton gradient. This chain is NADH-quinone oxidoreductase subunit K, found in Methylobacterium nodulans (strain LMG 21967 / CNCM I-2342 / ORS 2060).